An 857-amino-acid polypeptide reads, in one-letter code: Putative disease resistance protein At1g50180 (857 aa).

Residues 27–60 (IGDQVKQLQDELKRLNCFLKDADEKQHESERVRN) adopt a coiled-coil conformation. The NB-ARC domain occupies 148 to 461 (SLREQRQSFP…AEGMVMPVKH (314 aa)). ATP is bound at residue 192–199 (GMGGLGKT). LRR repeat units follow at residues 653–678 (MTSL…SLSK), 680–703 (LKRL…DVTQ), 754–780 (LPNL…NLEN), and 791–816 (MMRL…RFLK).

The protein belongs to the disease resistance NB-LRR family.

Functionally, potential disease resistance protein. The polypeptide is Putative disease resistance protein At1g50180 (Arabidopsis thaliana (Mouse-ear cress)).